Reading from the N-terminus, the 539-residue chain is Serine/threonine-protein kinase BUR1 (539 aa).

A compositionally biased stretch (polar residues) spans 1–15 (MEKLSETTPNGTSPR). The interval 1 to 27 (MEKLSETTPNGTSPRTFALNHSRPRSS) is disordered. Positions 37–339 (YELLGKLGEG…AVDALQHPWF (303 aa)) constitute a Protein kinase domain. Residues 43–51 (LGEGTFGEV) and Lys-66 contribute to the ATP site. Asp-169 serves as the catalytic Proton acceptor. Positions 370–539 (AALPPAPKGG…DRPDHNGYRR (170 aa)) are disordered. Basic and acidic residues-rich tracts occupy residues 414 to 428 (NGPD…RERG), 471 to 514 (NRDD…DRGT), and 521 to 539 (PRHD…GYRR).

This sequence belongs to the protein kinase superfamily. CMGC Ser/Thr protein kinase family. CDC2/CDKX subfamily.

It localises to the nucleus. It carries out the reaction L-seryl-[protein] + ATP = O-phospho-L-seryl-[protein] + ADP + H(+). It catalyses the reaction L-threonyl-[protein] + ATP = O-phospho-L-threonyl-[protein] + ADP + H(+). The catalysed reaction is [DNA-directed RNA polymerase] + ATP = phospho-[DNA-directed RNA polymerase] + ADP + H(+). Serine/threonine-protein kinase involved in transcription regulation. Phosphorylates the UBC2/RAD6 ubiquitin-conjugating enzyme (E2), leading to monoubiquitination of histone H2B and the silencing of telomeric-associated genes. Also required for histone H3 methylation. Necessary for the recovery from pheromone-induced growth arrest in the cell cycle G1 phase. The protein is Serine/threonine-protein kinase BUR1 (BUR1) of Gibberella zeae (strain ATCC MYA-4620 / CBS 123657 / FGSC 9075 / NRRL 31084 / PH-1) (Wheat head blight fungus).